The primary structure comprises 262 residues: Catechol O-methyltransferase domain-containing protein 1 (262 aa).

The chain crosses the membrane as a helical; Signal-anchor for type II membrane protein span at residues 12 to 32; sequence AALALGSAALGAAFATGLFLG. S-adenosyl-L-methionine contacts are provided by residues D108, 110-111, S116, E134, V135, A163, D185, D187, and Y194; that span reads GT.

Belongs to the class I-like SAM-binding methyltransferase superfamily. Cation-dependent O-methyltransferase family. Homodimer.

The protein resides in the membrane. Putative O-methyltransferase. The protein is Catechol O-methyltransferase domain-containing protein 1 (COMTD1) of Homo sapiens (Human).